The chain runs to 465 residues: tRNA modification GTPase MnmE (465 aa).

3 residues coordinate (6S)-5-formyl-5,6,7,8-tetrahydrofolate: R30, E92, and R132. The region spanning 227 to 388 (GLQVALVGRP…LIEAVLKTCG (162 aa)) is the TrmE-type G domain. N237 is a K(+) binding site. Residues 237 to 242 (NVGKSS), 256 to 262 (TDLPGTT), 281 to 284 (DTAG), and 342 to 345 (NKAD) each bind GTP. Residue S241 participates in Mg(2+) binding. Residues T256, L258, and T261 each coordinate K(+). T262 provides a ligand contact to Mg(2+). K465 contributes to the (6S)-5-formyl-5,6,7,8-tetrahydrofolate binding site.

The protein belongs to the TRAFAC class TrmE-Era-EngA-EngB-Septin-like GTPase superfamily. TrmE GTPase family. Homodimer. Heterotetramer of two MnmE and two MnmG subunits. Requires K(+) as cofactor.

The protein resides in the cytoplasm. Exhibits a very high intrinsic GTPase hydrolysis rate. Involved in the addition of a carboxymethylaminomethyl (cmnm) group at the wobble position (U34) of certain tRNAs, forming tRNA-cmnm(5)s(2)U34. This is tRNA modification GTPase MnmE from Prochlorococcus marinus (strain MIT 9303).